The chain runs to 131 residues: Small ribosomal subunit protein eS6 (131 aa).

Residues 76–95 form a disordered region; that stretch reads APPGFKPKRKGERRRKTVRG. The span at 81 to 93 shows a compositional bias: basic residues; sequence KPKRKGERRRKTV.

This sequence belongs to the eukaryotic ribosomal protein eS6 family.

The protein is Small ribosomal subunit protein eS6 of Methanocaldococcus jannaschii (strain ATCC 43067 / DSM 2661 / JAL-1 / JCM 10045 / NBRC 100440) (Methanococcus jannaschii).